The primary structure comprises 373 residues: Arfaptin-1 (373 aa).

Positions 1 to 47 (MAQESPKNSAAEIPVTSNGEVDDSREHSFNRDLKHSLPSGLGLSETQ) are disordered. At alanine 2 the chain carries N-acetylalanine. 7 positions are modified to phosphoserine: serine 5, serine 28, serine 36, serine 39, serine 69, serine 79, and serine 132. The segment covering 22 to 35 (DDSREHSFNRDLKH) has biased composition (basic and acidic residues). Positions 153–353 (TVDLELEAQI…NQKQLEQTLK (201 aa)) constitute an AH domain. Threonine 361 is modified (phosphothreonine).

Forms homodimers or heterodimers with ARFIP2. Interacts with non-myristoylated GTP-bound ARF3, but not to GDP-bound ARF3. Interacts with ARF1. Binds with lower affinity to ARF5 and with very little affinity to ARF6. Interacts with ARL1. Interacts with ATG9A. Post-translationally, phosphorylated by PRKD1; phosphorylation delocalizes ARFIP1 from the Golgi and disrupts its ability to inhibit the activity of ADP-ribosylation factor, an important component of the vesicle scission machinery. Ubiquitously expressed. Higher levels in liver, pancreas, placenta, skeletal muscle and heart.

It localises to the golgi apparatus. The protein resides in the trans-Golgi network membrane. Functionally, plays a role in controlling biogenesis of secretory granules at the trans-Golgi network. Mechanistically, binds ARF-GTP at the neck of a growing secretory granule precursor and forms a protective scaffold. Once the granule precursor has been completely loaded, active PRKD1 phosphorylates ARFIP1 and releases it from ARFs. In turn, ARFs induce fission. Through this mechanism, ensures proper secretory granule formation at the Golgi of pancreatic beta cells. The protein is Arfaptin-1 of Homo sapiens (Human).